A 346-amino-acid polypeptide reads, in one-letter code: MAHRPRWTLSQVTELFEKPLLDLLFEAQQVHRQHFDPRQVQVSTLLSIKTGACPEDCKYCPQSSRYKTGLEAERLMEVEQVLESARKAKAAGSTRFCMGAAWKNPHERDMPYLEQMVQGVKAMGLEACMTLGTLSESQAQRLANAGLDYYNHNLDTSPEFYGNIITTRTYQERLDTLEKVRDAGIKVCSGGIVGLGETVKDRAGLLLQLANLPTPPESVPINMLVKVKGTPLADNDDVDAFDFIRTIAVARIMMPTSYVRLSAGREQMNEQTQAMCFMAGANSIFYGCKLLTTPNPEEDKDLQLFRKLGLNPQQTAVLAGDNEQQQRLEQALMTPDTDEYYNAAAL.

One can recognise a Radical SAM core domain in the interval 38 to 256; the sequence is RQVQVSTLLS…IAVARIMMPT (219 aa). Cys53, Cys57, and Cys60 together coordinate [4Fe-4S] cluster. Residues Cys97, Cys128, Cys188, and Arg260 each coordinate [2Fe-2S] cluster.

It belongs to the radical SAM superfamily. Biotin synthase family. Homodimer. [4Fe-4S] cluster is required as a cofactor. It depends on [2Fe-2S] cluster as a cofactor.

It catalyses the reaction (4R,5S)-dethiobiotin + (sulfur carrier)-SH + 2 reduced [2Fe-2S]-[ferredoxin] + 2 S-adenosyl-L-methionine = (sulfur carrier)-H + biotin + 2 5'-deoxyadenosine + 2 L-methionine + 2 oxidized [2Fe-2S]-[ferredoxin]. The protein operates within cofactor biosynthesis; biotin biosynthesis; biotin from 7,8-diaminononanoate: step 2/2. Its function is as follows. Catalyzes the conversion of dethiobiotin (DTB) to biotin by the insertion of a sulfur atom into dethiobiotin via a radical-based mechanism. The chain is Biotin synthase from Escherichia coli (strain K12 / DH10B).